Here is a 335-residue protein sequence, read N- to C-terminus: Phosphate acyltransferase (335 aa).

It belongs to the PlsX family. In terms of assembly, homodimer. Probably interacts with PlsY.

The protein localises to the cytoplasm. The catalysed reaction is a fatty acyl-[ACP] + phosphate = an acyl phosphate + holo-[ACP]. Its pathway is lipid metabolism; phospholipid metabolism. Catalyzes the reversible formation of acyl-phosphate (acyl-PO(4)) from acyl-[acyl-carrier-protein] (acyl-ACP). This enzyme utilizes acyl-ACP as fatty acyl donor, but not acyl-CoA. The chain is Phosphate acyltransferase from Streptococcus equi subsp. equi (strain 4047).